The following is a 341-amino-acid chain: MASVASSTVFASSLPHHRATTRAPPTPPRIPRRARLPGRSVVSCLPKRGSEKLVVTRASDEEGPPEPAGQGRGGGRAWPSLDASSCGLALAAAAGVLMLQGSQQALAGTEFMGMQDVVGDLGDISTGFASAFLLIFFSELGDRTFFIAALLAARNSGAIIFLGTFGALAVMTIISVVLGRAFHYVDGIIPFSFGGTDFPVDDFLAACLLVYYGITTLLDAASGDEEKMNEEQEEAELAVSKFLGNGAGIISAASTIASTFVLVFIAEWGDKSFFSTIALAAASSPLGVIAGSLAGHAVATLIAVLGGSLLGTFLSEKIVAYIGGSLFLAFAAVTLVEIVNS.

Residues 1–13 (MASVASSTVFASS) show a composition bias toward low complexity. 2 disordered regions span residues 1 to 41 (MASV…GRSV) and 54 to 76 (VVTR…GGGR). Residues 1-57 (MASVASSTVFASSLPHHRATTRAPPTPPRIPRRARLPGRSVVSCLPKRGSEKLVVTR) constitute a chloroplast transit peptide. The next 7 helical transmembrane spans lie at 79 to 99 (PSLD…VLML), 117 to 137 (VVGD…LIFF), 158 to 178 (AIIF…SVVL), 203 to 223 (FLAA…AASG), 246 to 266 (GAGI…VFIA), 286 to 306 (LGVI…AVLG), and 318 to 338 (IVAY…LVEI).

The protein belongs to the GDT1 family.

The protein localises to the plastid. The protein resides in the chloroplast membrane. In Oryza sativa subsp. japonica (Rice), this protein is GDT1-like protein 1, chloroplastic.